The sequence spans 834 residues: Probable glucan 1,3-beta-glucosidase D (834 aa).

Basic and acidic residues predominate over residues 1 to 33; it reads MPSHSRSRDRYGGRDSDREARYDYDYARRRYAT. Disordered stretches follow at residues 1 to 188 and 200 to 251; these read MPSH…ASHL and QYEK…TKAR. Residues 1–306 lie on the Cytoplasmic side of the membrane; the sequence is MPSHSRSRDR…GGRPFWKRKK (306 aa). Positions 34–45 are enriched in acidic residues; the sequence is DDNDDDYDDDEL. Basic and acidic residues-rich tracts occupy residues 46 to 76, 98 to 173, 201 to 218, and 228 to 245; these read EHGL…RDAE, YGHD…ETAA, YEKE…AAKA, and VVGE…ESHR. A helical; Signal-anchor for type II membrane protein membrane pass occupies residues 307-327; it reads WIGLGALILILVIVIPVAVVV. Residues 328 to 834 lie on the Extracellular side of the membrane; sequence SKKHDNKSDP…PDFGNLPEYY (507 aa). Residues 331–354 are disordered; it reads HDNKSDPADPQGTSPGKSNLDGLS. N-linked (GlcNAc...) asparagine glycans are attached at residues Asn333, Asn379, Asn384, Asn396, Asn549, Asn561, and Asn570. Glu600 acts as the Proton donor in catalysis. Residues Asn639, Asn672, and Asn692 are each glycosylated (N-linked (GlcNAc...) asparagine). The active-site Nucleophile is Glu705.

This sequence belongs to the glycosyl hydrolase 5 (cellulase A) family.

It is found in the cell membrane. The enzyme catalyses Successive hydrolysis of beta-D-glucose units from the non-reducing ends of (1-&gt;3)-beta-D-glucans, releasing alpha-glucose.. Its function is as follows. Glucosidase involved in the degradation of cellulosic biomass. Active on lichenan. This chain is Probable glucan 1,3-beta-glucosidase D (exgD), found in Neosartorya fischeri (strain ATCC 1020 / DSM 3700 / CBS 544.65 / FGSC A1164 / JCM 1740 / NRRL 181 / WB 181) (Aspergillus fischerianus).